Here is a 67-residue protein sequence, read N- to C-terminus: Arasin 2 (67 aa).

Positions 1–25 are cleaved as a signal peptide; that stretch reads MERRTLLVVLLVCSCVVAAAAEASP. Residues 22–44 are disordered; that stretch reads EASPSRWPSPGRPRPFPGRPNPI. Positions 31–44 are enriched in pro residues; sequence PGRPRPFPGRPNPI. Disulfide bonds link Cys-50–Cys-59 and Cys-52–Cys-57.

As to quaternary structure, interacts with chitin through the N-terminal region (26-48). This interaction may be important, since chitin is a component of the fungal cell wall, as well as of the crab exoskeleton (permitting a possible action of arasin in wound healing in case of lesions). Post-translationally, disulfide bonds are important for activity especially against Gram-negative bacteria, since the linearization of the peptide causes a strong decrease of activity on these bacteria. Mainly expressed in hemocytes. No or very low expression in heart, gills, inestines, and epidermis.

Antimicrobial peptide that has a large activity spectrum with activity against Gram-positive, Gram-negative bacteria, as well as against fungi. Shows activity at micromolar concentrations. Displays minimal inhibitory concentration (MIC) values lower than minimal bactericidal concentrations (MBC). May have a dual mode of action depending on the peptide concentrations. At MIC concentrations, the peptide penetrates into the cytoplasm of target cells (tested on the Gram-negative E.coli). The two inner membrane proteins YgdD and SbmA may be required for this uptake. At concentrations higher than MIC, arasin may act by disrupting membranes. Does not show hemolytic activity. This chain is Arasin 2, found in Hyas araneus (Atlantic lyre crab).